Reading from the N-terminus, the 363-residue chain is NAD(P)H-quinone oxidoreductase subunit 1, chloroplastic (363 aa).

6 consecutive transmembrane segments (helical) span residues Ile-27–Ile-47, Phe-98–Phe-118, Leu-127–Met-147, Tyr-248–Ser-268, Val-300–Ile-320, and Leu-336–Thr-356.

It belongs to the complex I subunit 1 family. As to quaternary structure, NDH is composed of at least 16 different subunits, 5 of which are encoded in the nucleus.

The protein resides in the plastid. It is found in the chloroplast thylakoid membrane. It catalyses the reaction a plastoquinone + NADH + (n+1) H(+)(in) = a plastoquinol + NAD(+) + n H(+)(out). The catalysed reaction is a plastoquinone + NADPH + (n+1) H(+)(in) = a plastoquinol + NADP(+) + n H(+)(out). In terms of biological role, NDH shuttles electrons from NAD(P)H:plastoquinone, via FMN and iron-sulfur (Fe-S) centers, to quinones in the photosynthetic chain and possibly in a chloroplast respiratory chain. The immediate electron acceptor for the enzyme in this species is believed to be plastoquinone. Couples the redox reaction to proton translocation, and thus conserves the redox energy in a proton gradient. This Platanus occidentalis (Sycamore) protein is NAD(P)H-quinone oxidoreductase subunit 1, chloroplastic.